The primary structure comprises 801 residues: Sucrose synthase isoform 2 (801 aa).

The interval 271–748 is GT-B glycosyltransferase; the sequence is MIFNVVILSP…GLKRIQEKYT (478 aa).

This sequence belongs to the glycosyltransferase 1 family. Plant sucrose synthase subfamily. Homotetramer. In terms of tissue distribution, exclusively expressed in flowers.

It carries out the reaction an NDP-alpha-D-glucose + D-fructose = a ribonucleoside 5'-diphosphate + sucrose + H(+). Sucrose-cleaving enzyme that provides UDP-glucose and fructose for various metabolic pathways. The polypeptide is Sucrose synthase isoform 2 (Daucus carota (Wild carrot)).